The sequence spans 92 residues: Small ribosomal subunit protein uS19 (92 aa).

Belongs to the universal ribosomal protein uS19 family.

In terms of biological role, protein S19 forms a complex with S13 that binds strongly to the 16S ribosomal RNA. This chain is Small ribosomal subunit protein uS19, found in Buchnera aphidicola subsp. Baizongia pistaciae (strain Bp).